We begin with the raw amino-acid sequence, 203 residues long: Endo-type membrane-bound lytic murein transglycosylase A (203 aa).

The first 15 residues, 1-15 (MKLRWFAFLVVLLAG), serve as a signal peptide directing secretion. C16 carries the N-palmitoyl cysteine lipid modification. Residue C16 is the site of S-diacylglycerol cysteine attachment.

This sequence belongs to the transglycosylase Slt family.

It is found in the cell outer membrane. The catalysed reaction is Endolytic cleavage of the (1-&gt;4)-beta-glycosidic linkage between N-acetylmuramic acid (MurNAc) and N-acetylglucosamine (GlcNAc) residues in peptidoglycan with concomitant formation of a 1,6-anhydrobond in the MurNAc residue.. Its function is as follows. Murein-degrading enzyme. May play a role in recycling of muropeptides during cell elongation and/or cell division. Preferentially cleaves at a distance of more than two disaccharide units from the ends of the glycan chain. The protein is Endo-type membrane-bound lytic murein transglycosylase A of Citrobacter koseri (strain ATCC BAA-895 / CDC 4225-83 / SGSC4696).